A 337-amino-acid polypeptide reads, in one-letter code: 4-hydroxythreonine-4-phosphate dehydrogenase (337 aa).

Substrate is bound by residues His139 and Thr140. A divalent metal cation-binding residues include His173, His218, and His273. Residues Lys281, Asn290, and Arg299 each contribute to the substrate site.

This sequence belongs to the PdxA family. Homodimer. Zn(2+) is required as a cofactor. It depends on Mg(2+) as a cofactor. Requires Co(2+) as cofactor.

It localises to the cytoplasm. The enzyme catalyses 4-(phosphooxy)-L-threonine + NAD(+) = 3-amino-2-oxopropyl phosphate + CO2 + NADH. It functions in the pathway cofactor biosynthesis; pyridoxine 5'-phosphate biosynthesis; pyridoxine 5'-phosphate from D-erythrose 4-phosphate: step 4/5. In terms of biological role, catalyzes the NAD(P)-dependent oxidation of 4-(phosphooxy)-L-threonine (HTP) into 2-amino-3-oxo-4-(phosphooxy)butyric acid which spontaneously decarboxylates to form 3-amino-2-oxopropyl phosphate (AHAP). In Rhodopseudomonas palustris (strain ATCC BAA-98 / CGA009), this protein is 4-hydroxythreonine-4-phosphate dehydrogenase.